We begin with the raw amino-acid sequence, 207 residues long: Outer-membrane lipoprotein LolB (207 aa).

The first 21 residues, 1–21, serve as a signal peptide directing secretion; that stretch reads MPMRKRHFYRLLPLASLLLAA. A lipid anchor (N-palmitoyl cysteine) is attached at Cys-22. Cys-22 carries the S-diacylglycerol cysteine lipid modification.

It belongs to the LolB family. In terms of assembly, monomer.

The protein resides in the cell outer membrane. In terms of biological role, plays a critical role in the incorporation of lipoproteins in the outer membrane after they are released by the LolA protein. This chain is Outer-membrane lipoprotein LolB, found in Yersinia pseudotuberculosis serotype O:1b (strain IP 31758).